The chain runs to 371 residues: Histidinol-phosphate aminotransferase (371 aa).

At Lys-228 the chain carries N6-(pyridoxal phosphate)lysine.

Belongs to the class-II pyridoxal-phosphate-dependent aminotransferase family. Histidinol-phosphate aminotransferase subfamily. Homodimer. Pyridoxal 5'-phosphate is required as a cofactor.

It catalyses the reaction L-histidinol phosphate + 2-oxoglutarate = 3-(imidazol-4-yl)-2-oxopropyl phosphate + L-glutamate. Its pathway is amino-acid biosynthesis; L-histidine biosynthesis; L-histidine from 5-phospho-alpha-D-ribose 1-diphosphate: step 7/9. The chain is Histidinol-phosphate aminotransferase from Thermosynechococcus vestitus (strain NIES-2133 / IAM M-273 / BP-1).